We begin with the raw amino-acid sequence, 363 residues long: dTDP-3-amino-3,6-dideoxy-alpha-D-galactopyranose transaminase (363 aa).

Residue Lys-185 is modified to N6-(pyridoxal phosphate)lysine.

It belongs to the DegT/DnrJ/EryC1 family. It depends on pyridoxal 5'-phosphate as a cofactor.

It carries out the reaction dTDP-3-amino-3,6-dideoxy-alpha-D-galactopyranose + 2-oxoglutarate = dTDP-3-dehydro-6-deoxy-alpha-D-galactose + L-glutamate. In terms of biological role, specifically aminates dTDP-6-deoxy-D-xylohex-3-ulose to form dTDP-D-Fucp3N in the biosynthesis of dTDP-3-acetamido-3,6-dideoxy-alpha-D-galactose, a glycan chain of the S-layer. This Aneurinibacillus thermoaerophilus protein is dTDP-3-amino-3,6-dideoxy-alpha-D-galactopyranose transaminase (fdtB).